The chain runs to 92 residues: Small ribosomal subunit protein uS19 (92 aa).

The protein belongs to the universal ribosomal protein uS19 family.

Functionally, protein S19 forms a complex with S13 that binds strongly to the 16S ribosomal RNA. This Oceanobacillus iheyensis (strain DSM 14371 / CIP 107618 / JCM 11309 / KCTC 3954 / HTE831) protein is Small ribosomal subunit protein uS19.